Consider the following 206-residue polypeptide: Large ribosomal subunit protein uL4 (206 aa).

The protein belongs to the universal ribosomal protein uL4 family. Part of the 50S ribosomal subunit.

One of the primary rRNA binding proteins, this protein initially binds near the 5'-end of the 23S rRNA. It is important during the early stages of 50S assembly. It makes multiple contacts with different domains of the 23S rRNA in the assembled 50S subunit and ribosome. Functionally, forms part of the polypeptide exit tunnel. The protein is Large ribosomal subunit protein uL4 of Rhodopseudomonas palustris (strain ATCC BAA-98 / CGA009).